We begin with the raw amino-acid sequence, 179 residues long: Adaptation to cold protein A (179 aa).

The disordered stretch occupies residues 133-179; it reads KATPAPKRSADDDFEDEDSDYADYSDDDDDEGEEEDGYYDHYDDEDR. A compositionally biased stretch (acidic residues) spans 144–179; that stretch reads DDFEDEDSDYADYSDDDDDEGEEEDGYYDHYDDEDR.

Part of an operon involved in cold adaptation. The protein is Adaptation to cold protein A of Shewanella oneidensis (strain ATCC 700550 / JCM 31522 / CIP 106686 / LMG 19005 / NCIMB 14063 / MR-1).